An 84-amino-acid polypeptide reads, in one-letter code: Large ribosomal subunit protein bL31B (84 aa).

This sequence belongs to the bacterial ribosomal protein bL31 family. Type B subfamily. Part of the 50S ribosomal subunit.

The protein is Large ribosomal subunit protein bL31B of Acinetobacter baumannii (strain AB307-0294).